The chain runs to 484 residues: Glutamate--tRNA ligase (484 aa).

The 'HIGH' region motif lies at 11 to 21 (PSPTGLLHIGN). The short motif at 255 to 259 (KLSKR) is the 'KMSKS' region element. Residue K258 coordinates ATP.

This sequence belongs to the class-I aminoacyl-tRNA synthetase family. Glutamate--tRNA ligase type 1 subfamily. In terms of assembly, monomer.

It localises to the cytoplasm. The catalysed reaction is tRNA(Glu) + L-glutamate + ATP = L-glutamyl-tRNA(Glu) + AMP + diphosphate. Functionally, catalyzes the attachment of glutamate to tRNA(Glu) in a two-step reaction: glutamate is first activated by ATP to form Glu-AMP and then transferred to the acceptor end of tRNA(Glu). The chain is Glutamate--tRNA ligase from Streptococcus agalactiae serotype III (strain NEM316).